Consider the following 92-residue polypeptide: Small ribosomal subunit protein uS19 (92 aa).

The protein belongs to the universal ribosomal protein uS19 family.

Functionally, protein S19 forms a complex with S13 that binds strongly to the 16S ribosomal RNA. This Klebsiella pneumoniae (strain 342) protein is Small ribosomal subunit protein uS19.